The sequence spans 319 residues: Sphingomyelinase D (319 aa).

Positions 1–23 are cleaved as a signal peptide; the sequence is MTPLLRTICAILCILIAVPLTFA. Histidine 44 is a catalytic residue. The Mg(2+) site is built by glutamate 64, aspartate 66, and aspartate 109. Residues 312–319 carry the SMD-tail motif; sequence ATGADKPW.

It belongs to the sphingomyelinase D/phospholipase D family. Mg(2+) is required as a cofactor.

The protein localises to the secreted. The catalysed reaction is a sphingomyelin + H2O = an N-acylsphing-4-enine 1-phosphate + choline + H(+). In terms of biological role, catalyzes the hydrolysis of sphingomyelin. Sphingomyelinases D are produced by some spider in their venoms, but also by arthropods such as ticks, or pathogenic bacteria and fungi. They might play a role in pathogenicity through different mechanisms, such as membrane destabilization and host cell penetration, but also pulmonary inflammation and cutaneous lesions. The chain is Sphingomyelinase D from Ajellomyces capsulatus (strain G186AR / H82 / ATCC MYA-2454 / RMSCC 2432) (Darling's disease fungus).